Reading from the N-terminus, the 127-residue chain is MSREFKRSDRVAQELQKEIAVILQREVKDPRIGMVTVSDVEVSRDLAYAKIFVTFLFDNDQSVIEQGMKGLEKASPYIRSLVGKAMRLRIVPELRFIYDQSLVEGMRMSNLVSNVIKNDEAKHKEEE.

It belongs to the RbfA family. As to quaternary structure, monomer. Binds 30S ribosomal subunits, but not 50S ribosomal subunits or 70S ribosomes.

It localises to the cytoplasm. Functionally, one of several proteins that assist in the late maturation steps of the functional core of the 30S ribosomal subunit. Associates with free 30S ribosomal subunits (but not with 30S subunits that are part of 70S ribosomes or polysomes). Required for efficient processing of 16S rRNA. May interact with the 5'-terminal helix region of 16S rRNA. The polypeptide is Ribosome-binding factor A (Actinobacillus pleuropneumoniae serotype 7 (strain AP76)).